Here is a 561-residue protein sequence, read N- to C-terminus: Microtubule-associated protein VP6 (561 aa).

In terms of assembly, interacts with VP2.

The protein resides in the virion. It is found in the host cytoplasm. Its subcellular location is the host cytoskeleton. Functionally, minor inner capsid component. Displays NTPase and RNA 5'-triphosphatase (RTPase) activities. May function as a cofactor of polymerase VP2. Associates with microtubules and plays a role in the formation, structural organization and morphology of viral inclusions, where the assembly of cores and the replication of viral RNA occur. This is Microtubule-associated protein VP6 (S6) from Lymantria dispar cypovirus 1 (isolate Rao) (LdCPV-1).